Here is a 433-residue protein sequence, read N- to C-terminus: Elongation factor 1-alpha (433 aa).

The tr-type G domain maps to 5–227; that stretch reads KPHLNLVVIG…AFDFFKEPPR (223 aa). The segment at 14-21 is G1; that stretch reads GHIDHGKS. 14–21 serves as a coordination point for GTP; it reads GHIDHGKS. S21 is a Mg(2+) binding site. Positions 70–74 are G2; sequence GITID. A G3 region spans residues 91–94; the sequence is DAPG. Residues 91–95 and 153–156 each bind GTP; these read DAPGH and NKMD. A G4 region spans residues 153–156; sequence NKMD. Residues 192 to 194 are G5; that stretch reads SAW.

Belongs to the TRAFAC class translation factor GTPase superfamily. Classic translation factor GTPase family. EF-Tu/EF-1A subfamily.

The protein localises to the cytoplasm. The enzyme catalyses GTP + H2O = GDP + phosphate + H(+). Functionally, GTP hydrolase that promotes the GTP-dependent binding of aminoacyl-tRNA to the A-site of ribosomes during protein biosynthesis. This Thermofilum pendens (strain DSM 2475 / Hrk 5) protein is Elongation factor 1-alpha.